An 847-amino-acid chain; its full sequence is Nitrite reductase (NADH) large subunit (847 aa).

Position 44–79 (44–79) interacts with FAD; sequence YDRVHLSSYFSHHTAEELSLVREGFYEKHGIKVLVG. 193–225 contributes to the NAD(+) binding site; that stretch reads LRRKIESMGVRVHTSKNTLEIVQEGVEARKTMR. 4 residues coordinate [2Fe-2S] cluster: cysteine 425, cysteine 427, cysteine 459, and cysteine 462. [4Fe-4S] cluster-binding residues include cysteine 641, cysteine 647, cysteine 681, and cysteine 685. Cysteine 685 provides a ligand contact to siroheme.

It belongs to the nitrite and sulfite reductase 4Fe-4S domain family. As to quaternary structure, homodimer which associates with NirD. It depends on siroheme as a cofactor. Requires [2Fe-2S] cluster as cofactor. [4Fe-4S] cluster is required as a cofactor. The cofactor is FAD.

It carries out the reaction NH4(+) + 3 NAD(+) + 2 H2O = nitrite + 3 NADH + 5 H(+). Its pathway is nitrogen metabolism; nitrate reduction (assimilation). In Escherichia coli (strain K12), this protein is Nitrite reductase (NADH) large subunit (nirB).